The following is a 294-amino-acid chain: Glutamyl-Q tRNA(Asp) synthetase (294 aa).

Residues 7 to 11 (RFAPS) and glutamate 43 contribute to the L-glutamate site. Positions 10 to 20 (PSPSGPLHFGS) match the 'HIGH' region motif. Zn(2+) is bound by residues cysteine 99, cysteine 101, tyrosine 113, and cysteine 117. Tyrosine 168 and arginine 186 together coordinate L-glutamate. Positions 224-228 (KLSKQ) match the 'KMSKS' region motif. Lysine 227 contributes to the ATP binding site.

The protein belongs to the class-I aminoacyl-tRNA synthetase family. GluQ subfamily. Zn(2+) is required as a cofactor.

Functionally, catalyzes the tRNA-independent activation of glutamate in presence of ATP and the subsequent transfer of glutamate onto a tRNA(Asp). Glutamate is transferred on the 2-amino-5-(4,5-dihydroxy-2-cyclopenten-1-yl) moiety of the queuosine in the wobble position of the QUC anticodon. This Vibrio parahaemolyticus serotype O3:K6 (strain RIMD 2210633) protein is Glutamyl-Q tRNA(Asp) synthetase.